A 1357-amino-acid polypeptide reads, in one-letter code: DNA-directed RNA polymerase subunit beta (1357 aa).

This sequence belongs to the RNA polymerase beta chain family. As to quaternary structure, the RNAP catalytic core consists of 2 alpha, 1 beta, 1 beta' and 1 omega subunit. When a sigma factor is associated with the core the holoenzyme is formed, which can initiate transcription.

The catalysed reaction is RNA(n) + a ribonucleoside 5'-triphosphate = RNA(n+1) + diphosphate. In terms of biological role, DNA-dependent RNA polymerase catalyzes the transcription of DNA into RNA using the four ribonucleoside triphosphates as substrates. This chain is DNA-directed RNA polymerase subunit beta, found in Pseudomonas syringae pv. syringae (strain B728a).